The following is a 180-amino-acid chain: MTQRLSKLYFEQISPKLIEKFSYKNMHQVPRVEKIVINRGVGEAAQSNKVLESSLKELNLISGQKGIITRSKKAIAGFKIREKVPVGVFVTLRGDRMYSFLDRLINLALPRIRDFQGISAQSFDKYGNYSLGLEEQLMFPEIEYDKIDQLRGMDISIVTNARNSEEGLALLKEFGLPFKS.

This sequence belongs to the universal ribosomal protein uL5 family. Part of the 50S ribosomal subunit; contacts the 5S rRNA.

Its subcellular location is the plastid. It is found in the chloroplast. In terms of biological role, binds 5S rRNA, forms part of the central protuberance of the 50S subunit. The protein is Large ribosomal subunit protein uL5c (rpl5) of Stigeoclonium helveticum (Green alga).